The sequence spans 87 residues: Tektin-2 (87 aa).

A coiled-coil region spans residues valine 26 to leucine 55.

This sequence belongs to the tektin family. Microtubule inner protein component of sperm flagellar doublet microtubules. May interact with CCDC172. Post-translationally, tyrosine phosphorylated. Ubiquitinated, leading to its degradation. Deubiquitinated by USP16, promoting its stability. Detected in sperm flagella (at protein level).

It localises to the cytoplasm. The protein localises to the cytoskeleton. Its subcellular location is the cilium axoneme. The protein resides in the flagellum axoneme. It is found in the microtubule organizing center. Its function is as follows. Microtubule inner protein (MIP) part of the dynein-decorated doublet microtubules (DMTs) in cilia and flagellar axoneme. Plays a key role in the assembly or attachment of the inner dynein arm to microtubules in sperm flagella and tracheal cilia. Forms filamentous polymers in the walls of ciliary and flagellar microtubules. This is Tektin-2 from Mesocricetus auratus (Golden hamster).